Reading from the N-terminus, the 255-residue chain is Type III pantothenate kinase (255 aa).

Residue Asp6 to Val13 participates in ATP binding. Substrate is bound by residues Tyr100 and Gly107 to Arg110. Catalysis depends on Asp109, which acts as the Proton acceptor. Asp129 provides a ligand contact to K(+). Thr132 is an ATP binding site. Residue Thr184 participates in substrate binding.

It belongs to the type III pantothenate kinase family. Homodimer. The cofactor is NH4(+). Requires K(+) as cofactor.

Its subcellular location is the cytoplasm. The enzyme catalyses (R)-pantothenate + ATP = (R)-4'-phosphopantothenate + ADP + H(+). The protein operates within cofactor biosynthesis; coenzyme A biosynthesis; CoA from (R)-pantothenate: step 1/5. Functionally, catalyzes the phosphorylation of pantothenate (Pan), the first step in CoA biosynthesis. The polypeptide is Type III pantothenate kinase (Syntrophomonas wolfei subsp. wolfei (strain DSM 2245B / Goettingen)).